The sequence spans 276 residues: Glutamate racemase (276 aa).

Residues 10-11 and 42-43 each bind substrate; these read DS and YG. Cysteine 73 (proton donor/acceptor) is an active-site residue. 74 to 75 provides a ligand contact to substrate; that stretch reads NS. Cysteine 183 functions as the Proton donor/acceptor in the catalytic mechanism. 184 to 185 is a substrate binding site; it reads TH.

This sequence belongs to the aspartate/glutamate racemases family.

It catalyses the reaction L-glutamate = D-glutamate. It participates in cell wall biogenesis; peptidoglycan biosynthesis. Functionally, provides the (R)-glutamate required for cell wall biosynthesis. This chain is Glutamate racemase, found in Parafrankia sp. (strain EAN1pec).